The sequence spans 559 residues: Formate--tetrahydrofolate ligase (559 aa).

67–74 is an ATP binding site; sequence TPAGEGKS.

Belongs to the formate--tetrahydrofolate ligase family.

The enzyme catalyses (6S)-5,6,7,8-tetrahydrofolate + formate + ATP = (6R)-10-formyltetrahydrofolate + ADP + phosphate. Its pathway is one-carbon metabolism; tetrahydrofolate interconversion. In Lactobacillus delbrueckii subsp. bulgaricus (strain ATCC 11842 / DSM 20081 / BCRC 10696 / JCM 1002 / NBRC 13953 / NCIMB 11778 / NCTC 12712 / WDCM 00102 / Lb 14), this protein is Formate--tetrahydrofolate ligase.